Reading from the N-terminus, the 574-residue chain is Hyaluronan synthase 3 (574 aa).

At 1–15 (MPVSLSTALRVVGTS) the chain is on the cytoplasmic side. A helical transmembrane segment spans residues 16 to 36 (LFALAVLGGILAAYVTGYQFI). Residues 37–44 (HTEKHYLS) lie on the Extracellular side of the membrane. Residues 45 to 65 (FGLYGAILGLHLFIQSLFAFL) traverse the membrane as a helical segment. Residues 66-398 (EHRRMRAERQ…NALWFHKHHL (333 aa)) lie on the Cytoplasmic side of the membrane. A helical membrane pass occupies residues 399–419 (WMTYESVVTGFFPFFLIATVI). The Extracellular segment spans residues 420–429 (QLFYRGRIWN). A helical membrane pass occupies residues 430-450 (ILLFLLTVQLVGIIKATYACF). The Cytoplasmic portion of the chain corresponds to 451-456 (LRGSAE). The helical transmembrane segment at 457–477 (MIFVSLYALLYMSSLLPAKMF) threads the bilayer. Topologically, residues 478-494 (AIATINKSGWGTSGRRT) are extracellular. A helical membrane pass occupies residues 495–515 (IVVNFVGLLPVSVWAAVLLGG). Residues 516 to 530 (LAYTAYSQDLLSDTE) lie on the Cytoplasmic side of the membrane. The helical transmembrane segment at 531–551 (VAFLISGAVLYACYWVALLTL) threads the bilayer. The Extracellular portion of the chain corresponds to 552 to 574 (YLAMVARRCGKRKEQCGLVFAEV).

It belongs to the NodC/HAS family. The cofactor is Mg(2+). O-GlcNAcylation increases the hyaluronan synthase activity, HAS3 stability and its plasma membrane residence. The concentration of UDP-GlcNAc controls the level of O-GlcNAc modification.

Its subcellular location is the cell membrane. The protein localises to the golgi apparatus membrane. It is found in the golgi apparatus. It localises to the trans-Golgi network membrane. The protein resides in the cytoplasmic vesicle. The enzyme catalyses [hyaluronan](n) + UDP-N-acetyl-alpha-D-glucosamine = N-acetyl-beta-D-glucosaminyl-(1-&gt;4)-[hyaluronan](n) + UDP + H(+). It carries out the reaction N-acetyl-beta-D-glucosaminyl-(1-&gt;4)-[hyaluronan](n) + UDP-alpha-D-glucuronate = [hyaluronan](n+1) + UDP + H(+). Its pathway is glycan biosynthesis; hyaluronan biosynthesis. Functionally, catalyzes the addition of GlcNAc or GlcUA monosaccharides to the nascent hyaluronan polymer. Therefore, it is essential to hyaluronan synthesis a major component of most extracellular matrices that has a structural role in tissues architectures and regulates cell adhesion, migration and differentiation. This is one of three isoenzymes responsible for cellular hyaluronan synthesis. In Gallus gallus (Chicken), this protein is Hyaluronan synthase 3 (HAS3).